Reading from the N-terminus, the 178-residue chain is Large ribosomal subunit protein uL6 (178 aa).

Belongs to the universal ribosomal protein uL6 family. As to quaternary structure, part of the 50S ribosomal subunit.

Its function is as follows. This protein binds to the 23S rRNA, and is important in its secondary structure. It is located near the subunit interface in the base of the L7/L12 stalk, and near the tRNA binding site of the peptidyltransferase center. The polypeptide is Large ribosomal subunit protein uL6 (Campylobacter jejuni subsp. doylei (strain ATCC BAA-1458 / RM4099 / 269.97)).